We begin with the raw amino-acid sequence, 553 residues long: ATP synthase F(1) complex subunit alpha, mitochondrial (553 aa).

Residues 1 to 43 constitute a mitochondrion transit peptide; that stretch reads MLSVRVAAAVARALPRRAGLVSKNALGSSFVGARNLHASNTRL. A phosphoserine mark is found at Ser53 and Ser65. Phosphoserine; alternate is present on Ser76. Ser76 carries an O-linked (GlcNAc) serine; alternate glycan. Position 106 is a phosphoserine (Ser106). An N6-acetyllysine mark is found at Lys123, Lys126, and Lys132. Residue Thr134 is modified to Phosphothreonine. Lys161 is subject to N6-acetyllysine; alternate. Lys161 is modified (N6-succinyllysine; alternate). Ser166 carries the post-translational modification Phosphoserine. At Lys167 the chain carries N6-acetyllysine; alternate. The residue at position 167 (Lys167) is an N6-succinyllysine; alternate. A Phosphoserine modification is found at Ser184. Omega-N-methylarginine is present on Arg204. ATP is bound by residues Gln215, Gly217, Lys218, Thr219, and Ser220. Thr219 contacts Mg(2+). N6-acetyllysine; alternate is present on residues Lys230 and Lys239. Residues Lys230 and Lys239 each carry the N6-succinyllysine; alternate modification. Position 240 is an N6-acetyllysine (Lys240). N6-acetyllysine; alternate is present on residues Lys261 and Lys305. Residues Lys261 and Lys305 each carry the N6-succinyllysine; alternate modification. Asp312 serves as a coordination point for Mg(2+). Position 427 is an N6-acetyllysine; alternate (Lys427). Lys427 bears the N6-succinyllysine; alternate mark. Lys434 carries the N6-acetyllysine modification. 2 residues coordinate ATP: Gln473 and Gln475. N6-acetyllysine; alternate occurs at positions 498 and 506. 2 positions are modified to N6-succinyllysine; alternate: Lys498 and Lys506. Position 521 is a phosphoserine (Ser521). 2 positions are modified to N6-acetyllysine; alternate: Lys531 and Lys539. Lys531 and Lys539 each carry N6-succinyllysine; alternate. At Lys541 the chain carries N6-acetyllysine.

It belongs to the ATPase alpha/beta chains family. Homotrimer. Component of the ATP synthase complex composed at least of ATP5F1A/subunit alpha, ATP5F1B/subunit beta, ATP5MC1/subunit c (homooctomer), MT-ATP6/subunit a, MT-ATP8/subunit 8, ATP5ME/subunit e, ATP5MF/subunit f, ATP5MG/subunit g, ATP5MK/subunit k, ATP5MJ/subunit j, ATP5F1C/subunit gamma, ATP5F1D/subunit delta, ATP5F1E/subunit epsilon, ATP5PF/subunit F6, ATP5PB/subunit b, ATP5PD/subunit d, ATP5PO/subunit OSCP. ATP synthase complex consists of a soluble F(1) head domain (subunits alpha(3) and beta(3)) - the catalytic core - and a membrane F(0) domain - the membrane proton channel (subunits c, a, 8, e, f, g, k and j). These two domains are linked by a central stalk (subunits gamma, delta, and epsilon) rotating inside the F1 region and a stationary peripheral stalk (subunits F6, b, d, and OSCP). Interacts with ATPAF2. Interacts with HRG; the interaction occurs on the surface of T-cells and alters the cell morphology when associated with concanavalin (in vitro). Interacts with PLG (angiostatin peptide); the interaction inhibits most of the angiogenic properties of angiostatin. Interacts with BLOC1S1. Interacts with BCL2L1 isoform BCL-X(L); the interaction mediates the association of BCL2L1 isoform BCL-X(L) with the mitochondrial membrane F(1)F(0) ATP synthase and enhances neurons metabolic efficiency. Interacts with CLN5 and PPT1. Interacts with S100A1; this interaction increases F1-ATPase activity. Interacts with ABCB7; this interaction allows the regulation of cellular iron homeostasis and cellular reactive oxygen species (ROS) levels in cardiomyocytes. Post-translationally, acetylated on lysine residues. BLOC1S1 is required for acetylation. Acetylation of Lys-132, Lys-230 and Lys-498 is observed in liver mitochondria from fasted mice but not from fed mice.

Its subcellular location is the mitochondrion inner membrane. It is found in the cell membrane. Its function is as follows. Subunit alpha, of the mitochondrial membrane ATP synthase complex (F(1)F(0) ATP synthase or Complex V) that produces ATP from ADP in the presence of a proton gradient across the membrane which is generated by electron transport complexes of the respiratory chain. ATP synthase complex consist of a soluble F(1) head domain - the catalytic core - and a membrane F(1) domain - the membrane proton channel. These two domains are linked by a central stalk rotating inside the F(1) region and a stationary peripheral stalk. During catalysis, ATP synthesis in the catalytic domain of F(1) is coupled via a rotary mechanism of the central stalk subunits to proton translocation. In vivo, can only synthesize ATP although its ATP hydrolase activity can be activated artificially in vitro. With the catalytic subunit beta (ATP5F1B), forms the catalytic core in the F(1) domain. Subunit alpha does not bear the catalytic high-affinity ATP-binding sites. The protein is ATP synthase F(1) complex subunit alpha, mitochondrial of Mus musculus (Mouse).